A 353-amino-acid chain; its full sequence is Uroporphyrinogen decarboxylase (353 aa).

Substrate contacts are provided by residues 30–34 (RQAGR), aspartate 79, tyrosine 154, serine 209, and histidine 332.

This sequence belongs to the uroporphyrinogen decarboxylase family. In terms of assembly, homodimer.

Its subcellular location is the cytoplasm. It carries out the reaction uroporphyrinogen III + 4 H(+) = coproporphyrinogen III + 4 CO2. It functions in the pathway porphyrin-containing compound metabolism; protoporphyrin-IX biosynthesis; coproporphyrinogen-III from 5-aminolevulinate: step 4/4. Functionally, catalyzes the decarboxylation of four acetate groups of uroporphyrinogen-III to yield coproporphyrinogen-III. The polypeptide is Uroporphyrinogen decarboxylase (Mycobacterium ulcerans (strain Agy99)).